Reading from the N-terminus, the 912-residue chain is Protein translocase subunit SecA (912 aa).

ATP-binding positions include Gln-87, 105–109 (GEGKT), and Asp-508. The interval 865–912 (DEEAAQVQSGNAPLPVSQVTRDEPKVGRNDPCPCGSGKKYKHCHGQLS) is disordered. Cys-896, Cys-898, Cys-907, and His-908 together coordinate Zn(2+). The span at 902–912 (KKYKHCHGQLS) shows a compositional bias: basic residues.

The protein belongs to the SecA family. Monomer and homodimer. Part of the essential Sec protein translocation apparatus which comprises SecA, SecYEG and auxiliary proteins SecDF-YajC and YidC. The cofactor is Zn(2+).

The protein resides in the cell inner membrane. The protein localises to the cytoplasm. The catalysed reaction is ATP + H2O + cellular proteinSide 1 = ADP + phosphate + cellular proteinSide 2.. In terms of biological role, part of the Sec protein translocase complex. Interacts with the SecYEG preprotein conducting channel. Has a central role in coupling the hydrolysis of ATP to the transfer of proteins into and across the cell membrane, serving both as a receptor for the preprotein-SecB complex and as an ATP-driven molecular motor driving the stepwise translocation of polypeptide chains across the membrane. This is Protein translocase subunit SecA from Xanthomonas oryzae pv. oryzae (strain PXO99A).